Here is a 612-residue protein sequence, read N- to C-terminus: Cytoplasmic dynein 1 intermediate chain 2 (612 aa).

2 stretches are compositionally biased toward basic and acidic residues: residues 1–13 (MSDK…ELER) and 20–43 (QIRE…KKEA). 2 disordered regions span residues 1–117 (MSDK…MAKI) and 129–188 (TYTK…EEKQ). S2 carries the post-translational modification N-acetylserine. At S51 the chain carries Diphosphoserine. A phosphoserine mark is found at S51 and S84. Positions 82-91 (PSSKSVSTPS) are enriched in low complexity. T89 is subject to Phosphothreonine. S91, S95, and S98 each carry phosphoserine. Basic and acidic residues predominate over residues 164–188 (EKTLKKDEESDSKAPPHELTEEEKQ). WD repeat units lie at residues 251-300 (SKHR…TTPE), 304-344 (HCQS…RTPV), 353-394 (AHTH…HPQD), 403-443 (SKAV…AGIS), 448-493 (GHQG…PLYS), 496-536 (DNSD…EVPT), and 542-581 (EGNP…AVPR).

Belongs to the dynein intermediate chain family. Homodimer. The cytoplasmic dynein 1 complex consists of two catalytic heavy chains (HCs) and a number of non-catalytic subunits presented by intermediate chains (ICs), light intermediate chains (LICs) and light chains (LCs); the composition seems to vary in respect to the IC, LIC and LC composition. The heavy chain homodimer serves as a scaffold for the probable homodimeric assembly of the respective non-catalytic subunits. The ICs and LICs bind directly to the HC dimer and the LCs assemble on the IC dimer. Interacts with DYNLT3. Interacts with DYNLT1. Interacts (dephosphorylated at Ser-84) with DCTN1. Interacts with BICD2. Interacts with SPEF2. Interacts with CFAP61. Post-translationally, the phosphorylation status of Ser-84 appears to be involved in dynactin-dependent target binding. In terms of processing, pyrophosphorylation by 5-diphosphoinositol pentakisphosphate (5-IP7) promotes interaction with DCTN1. Serine pyrophosphorylation is achieved by Mg(2+)-dependent, but enzyme independent transfer of a beta-phosphate from a inositol pyrophosphate to a pre-phosphorylated serine residue.

The protein resides in the cytoplasm. Its subcellular location is the cytoskeleton. Its function is as follows. Acts as one of several non-catalytic accessory components of the cytoplasmic dynein 1 complex that are thought to be involved in linking dynein to cargos and to adapter proteins that regulate dynein function. Cytoplasmic dynein 1 acts as a motor for the intracellular retrograde motility of vesicles and organelles along microtubules. The intermediate chains mediate the binding of dynein to dynactin via its 150 kDa component (p150-glued) DCTN1. Involved in membrane-transport, such as Golgi apparatus, late endosomes and lysosomes. This Bos taurus (Bovine) protein is Cytoplasmic dynein 1 intermediate chain 2 (DYNC1I2).